Consider the following 61-residue polypeptide: Small ribosomal subunit protein uS14 (61 aa).

Cysteine 24, cysteine 27, cysteine 40, and cysteine 43 together coordinate Zn(2+).

The protein belongs to the universal ribosomal protein uS14 family. Zinc-binding uS14 subfamily. Part of the 30S ribosomal subunit. Contacts proteins S3 and S10. The cofactor is Zn(2+).

Functionally, binds 16S rRNA, required for the assembly of 30S particles and may also be responsible for determining the conformation of the 16S rRNA at the A site. This is Small ribosomal subunit protein uS14 from Helicobacter pylori (strain G27).